We begin with the raw amino-acid sequence, 1285 residues long: Transmembrane channel-like protein 1 (1285 aa).

Residues 1–29 form a disordered region; sequence MQEAARRASLRKEHTPTNEKFGDLSKQDS. At 1–164 the chain is on the cytoplasmic side; it reads MQEAARRASL…KIKRIESHFG (164 aa). A helical transmembrane segment spans residues 165–202; sequence SVVSSYFTFLRWIVFVNIMITLIALVFVVLPETLADSV. At 203 to 260 the chain is on the extracellular side; sequence ANEGRFNRTKTRKQIPANERVHADELAVVWHYDGYLRYSPLFYGYYSDDPFLGNKIKY. A glycan (N-linked (GalNAc...) asparagine) is linked at Asn209. A helical transmembrane segment spans residues 261–292; it reads ALPLAYFMVTLTIFAYSFFAILRKMAANARMS. Over 293–349 the chain is Cytoplasmic; that stretch reads KLSGSKAEQYIFNWKLFTGWDYTIGNSETASNTVMAVVIKLRESIADIKKDAHGKFR. Residues 350-381 form a helical membrane-spanning segment; sequence LLQFSLRVFANIIICAMLGFSIYCIIFAVQKS. Topologically, residues 382-388 are extracellular; sequence QVQDDGN. The helical transmembrane segment at 389–416 threads the bilayer; sequence LFTKNQVPSVVSTITHVFPMIFDLIGKM. Residues 417 to 420 are Cytoplasmic-facing; that stretch reads ENYH. Residues 421–455 traverse the membrane as a helical segment; the sequence is PRTALRAHLGRVLILYTVNYITLIFALFEKMTALR. Topologically, residues 456–667 are extracellular; that stretch reads DRVNSTSTSS…NHDGHNNDIC (212 aa). Residues 458 to 488 are disordered; that stretch reads VNSTSTSSSHRTKRQQGGWNPNMQRPPPYAS. A disulfide bridge connects residues Cys667 and Cys816. The chain crosses the membrane as a helical span at residues 668–705; it reads WETIIGQEIVKLVTMDLIFTILSILVIDLFRGLWIKYC. Positions 696 to 720 are required for interaction with tmie; it reads LFRGLWIKYCSSWWCWDIETTFPEY. The Cytoplasmic segment spans residues 706-724; sequence SSWWCWDIETTFPEYGEFK. The helical transmembrane segment at 725–745 threads the bilayer; sequence VAENVLHIINNQGMIWLGLFF. The Extracellular portion of the chain corresponds to 746-748; sequence APL. The helical transmembrane segment at 749 to 771 threads the bilayer; that stretch reads LPAINNIKLIILMYIRGWAVMTC. The required for interaction with tmie stretch occupies residues 766-773; that stretch reads WAVMTCNV. Residues 772-785 lie on the Cytoplasmic side of the membrane; sequence NVPAREIFRASRSS. Residues 786-809 traverse the membrane as a helical segment; the sequence is NFYLGILLIWLLLCTLPVGFVIAS. Topologically, residues 810–852 are extracellular; sequence MSPSRSCGPFARYQHFYTVVTREIEKRVDQTVLSYIRHIASPG. A helical transmembrane segment spans residues 853 to 886; it reads VVIPIILFLILIIYFLFSLVRGLREANTDLQAQL. Residues 887–1285 are Cytoplasmic-facing; the sequence is VHERTEEKKK…DEDDSPRQID (399 aa). 2 disordered regions span residues 940-962 and 1114-1285; these read ADHALASDSSEESDINEDEDDER and TIKE…RQID. Residues 948–961 are compositionally biased toward acidic residues; the sequence is SSEESDINEDEDDE. 3 stretches are compositionally biased toward basic and acidic residues: residues 1121 to 1131, 1146 to 1156, and 1167 to 1182; these read DPGKSDKKQTS, DEARALREKMK, and TVEEKPKGGKSSESEF. Positions 1197-1208 are enriched in acidic residues; the sequence is TEEENEEEETDS.

It belongs to the TMC family. Homodimer. Interacts with calm-1 and tmie to form the MET channel. Expressed in the ASH polymodal avoidance neurons. Also expressed in other sensory neurons, including the ADF, ASE, ADL, AQR, PQR, URX and PHA cells.

The protein resides in the cell membrane. It catalyses the reaction Na(+)(in) = Na(+)(out). The enzyme catalyses Ca(2+)(in) = Ca(2+)(out). The catalysed reaction is K(+)(in) = K(+)(out). Functionally, pore-forming subunit of the mechanotransducer (MET) non-selective cation channel complex. The MET complex is composed of symmetric dimeric MET channels, each channel comprising two copies of pore-forming ion-conducting transmembrane TMC subunits and auxiliary proteins including the transmembrane inner ear protein/tmie, the calcium-binding protein/calm-1 and arrestin domain protein arrd-6. Sodium ions are the most permeable, whereas calcium and potassium have lower indices. Sodium-sensor ion channel that acts specifically in salt taste chemosensation. Required for salt-evoked neuronal activity and behavioral avoidance of high concentrations of NaCl. The protein is Transmembrane channel-like protein 1 (tmc-1) of Caenorhabditis elegans.